Here is a 236-residue protein sequence, read N- to C-terminus: 2,3,4,5-tetrahydropyridine-2,6-dicarboxylate N-acetyltransferase (236 aa).

It belongs to the transferase hexapeptide repeat family. DapH subfamily.

The enzyme catalyses (S)-2,3,4,5-tetrahydrodipicolinate + acetyl-CoA + H2O = L-2-acetamido-6-oxoheptanedioate + CoA. It participates in amino-acid biosynthesis; L-lysine biosynthesis via DAP pathway; LL-2,6-diaminopimelate from (S)-tetrahydrodipicolinate (acetylase route): step 1/3. In terms of biological role, catalyzes the transfer of an acetyl group from acetyl-CoA to tetrahydrodipicolinate. The sequence is that of 2,3,4,5-tetrahydropyridine-2,6-dicarboxylate N-acetyltransferase from Geobacillus kaustophilus (strain HTA426).